A 950-amino-acid polypeptide reads, in one-letter code: MORC family CW-type zinc finger protein 1 (950 aa).

Residues 281 to 342 (KGKFKTEVQK…TKHKSLRQKQ (62 aa)) adopt a coiled-coil conformation. The CW-type zinc finger occupies 465 to 530 (SLESLQWRRR…SCNQIERLPS (66 aa)). Zn(2+) contacts are provided by Cys485, Cys488, Cys511, and Cys522. Disordered stretches follow at residues 532–551 (PLGT…RQLQ) and 679–700 (KKQQ…ASSR). The span at 541 to 550 (PSKDERERQL) shows a compositional bias: basic and acidic residues. The stretch at 885 to 916 (LGQCELKRKRTEEKLSDLRAKLALLLQKLQLG) forms a coiled coil.

As to expression, expressed at very low level in male germ cells.

The protein resides in the nucleus. Functionally, required for spermatogenesis. Essential for de novo DNA methylation and silencing of transposable elements in the male embryonic germ cells. Not required for piRNA biosynthesis. This Mus musculus (Mouse) protein is MORC family CW-type zinc finger protein 1.